The chain runs to 557 residues: MDGIVPDIAVGTKRGSDELFSACVTNGPFIMSSNSASTANGNDSKKFKGDNRSAGVPSRVIHIRKLPSDVTEGEVISLGLPFGKVTNLLMLKGKNQAFIEMNTEEAANTMVNYYTSVTPVLRGQPIYIQFSNHKELKTDSSPNQARAQAALQAVNSVQSGNLALAASAAAVDAGMAMAGQSPVLRIIVENLFYPVTLDVLHQIFSKFGTVLKIITFTKNNQFQALLQYADPVSAQHAKLSLDGQNIYNACCTLRIDFSKLTSLNVKYNNDKSRDYTRPDLPSGDNQPSLDQTMAAAFGAPGIMSASPYAGAGFPPTFAIPQAAGLSVPNVHGALAPLAIPSAAAAAAAAGRIAIPGLAGAGNSVLLVSNLNPERVTPQSLFILFGVYGDVQRVKILFNKKENALVQMADGSQAQLAMSHLNGHKLHGKPVRITLSKHQNVQLPREGQEDQGLTKDYGNSPLHRFKKPGSKNFQNIFPPSATLHLSNIPPSISEEDLKILFSSNGGIVKGFKFFQKDRKMALIQMGSVEEAIQALIDLHNHDLGENHHLRVSFSKSTI.

Methionine 1 is subject to N-acetylmethionine. Phosphoserine is present on serine 16. RRM domains lie at 59–143 (RVIH…SSPN), 184–260 (LRII…FSKL), and 363–437 (SVLL…LSKH). Lysine 65 participates in a covalent cross-link: Glycyl lysine isopeptide (Lys-Gly) (interchain with G-Cter in SUMO2). Tyrosine 127 is subject to Phosphotyrosine. Position 138 is a phosphothreonine (threonine 138). Serine 141 is modified (phosphoserine). Lysine 218 is covalently cross-linked (Glycyl lysine isopeptide (Lys-Gly) (interchain with G-Cter in SUMO2)). Residue serine 459 is modified to Phosphoserine. The 76-residue stretch at 480–555 (ATLHLSNIPP…HHLRVSFSKS (76 aa)) folds into the RRM 4 domain.

As to quaternary structure, monomer. Part of a ternary complex containing KHSRP, PTBP1, PTBP2 and HNRPH1. Interacts with RAVER1 and SFPQ.

The protein resides in the nucleus. Plays a role in pre-mRNA splicing and in the regulation of alternative splicing events. Activates exon skipping of its own pre-mRNA during muscle cell differentiation. Binds to the polypyrimidine tract of introns. May promote RNA looping when bound to two separate polypyrimidine tracts in the same pre-mRNA. May promote the binding of U2 snRNP to pre-mRNA. Cooperates with RAVER1 to modulate switching between mutually exclusive exons during maturation of the TPM1 pre-mRNA. Represses the splicing of MAPT/Tau exon 10. Binds to polypyrimidine-rich controlling element (PCE) of CFTR and promotes exon skipping of CFTR exon 9, thereby antagonizing TIA1 and its role in exon inclusion of CFTR exon 9. Plays a role in the splicing of pyruvate kinase PKM by binding repressively to a polypyrimidine tract flanking PKM exon 9, inhibiting exon 9 inclusion and resulting in exon 10 inclusion and production of the PKM M2 isoform. The polypeptide is Polypyrimidine tract-binding protein 1 (PTBP1) (Sus scrofa (Pig)).